The following is a 220-amino-acid chain: RPA-interacting protein B (220 aa).

Residues 1 to 45 (MEAERRHRALYKGTTPPWKETYRKRCVERLKSNRSKLLDKFRQVG) are interaction with importin beta. The interval 49–165 (HGGVGGSFLV…QCGVYINTQS (117 aa)) is interaction with RPA1. An RIP-type zinc finger spans residues 138-213 (CPVCNRNYLT…ASLFMSCQEC (76 aa)).

In terms of assembly, interacts directly with the RPA1 subunit of RPA complex. Interacts with importin beta, but not with importin alpha. Forms a complex with the RPA complex and importin beta, which is dissociated by Ran-GTP.

The protein resides in the nucleus. Its function is as follows. Mediates the import of RPA complex into the nucleus, via its interaction with importin beta. The sequence is that of RPA-interacting protein B (rpain-b) from Xenopus laevis (African clawed frog).